Reading from the N-terminus, the 289-residue chain is MQGILSIQSHVSFGHAGNSSAVFPMQRMGFEVWPIHTVQFSNHTQYQEGWTGRAFAAEDISELVRGLGNIGALEKCQAVLTGYQGSAEQCLAVEDTVAKVKQANPNALYVCDPVMGAPDKGCIVAPGIAENLLTRLMPMADVIVPNQFELSQFAEMEIHSLDDAITACQRALAKGPKVVLVKHLYCLENGSFNMLLATQEGIYLAKRPQFEFAKQPVGVGDLISAIFTSGLLKGWSPKQAFQHCHDACYGVLSATYHAGEWELQTIAAQQEFVEPSKHFPIEEVELEMA.

Residues serine 9 and 44–45 (TQ) contribute to the substrate site. ATP-binding residues include aspartate 112, valine 144, glutamate 149, and lysine 182. Aspartate 221 contributes to the substrate binding site.

Belongs to the pyridoxine kinase family. PdxY subfamily. Homodimer. Mg(2+) serves as cofactor.

The catalysed reaction is pyridoxal + ATP = pyridoxal 5'-phosphate + ADP + H(+). Its pathway is cofactor metabolism; pyridoxal 5'-phosphate salvage; pyridoxal 5'-phosphate from pyridoxal: step 1/1. In terms of biological role, pyridoxal kinase involved in the salvage pathway of pyridoxal 5'-phosphate (PLP). Catalyzes the phosphorylation of pyridoxal to PLP. The chain is Pyridoxal kinase PdxY from Vibrio parahaemolyticus serotype O3:K6 (strain RIMD 2210633).